Reading from the N-terminus, the 517-residue chain is PSTB2-interacting protein 1 (517 aa).

As to quaternary structure, interacts with PDR17/PSTB2 and SCS2.

Functionally, phosphatidic acid-binding protein involved in interorganelle phosphatidylserine (PtdSer) transport. Linkks a PtdSer donor membrane (via binding of SCS2 and phosphatidic acid present in the donor membrane) with an acceptor membrane (via its interaction with PDR17), forming a zone of apposition that facilitates PtdSer transfer. The chain is PSTB2-interacting protein 1 from Saccharomyces cerevisiae (strain ATCC 204508 / S288c) (Baker's yeast).